The primary structure comprises 190 residues: Transcription termination/antitermination protein NusG (190 aa).

Residues 141–165 (GDMVRVTSGPFADFSGVVSEVNAPQ) form the KOW domain.

This sequence belongs to the NusG family.

Its function is as follows. Participates in transcription elongation, termination and antitermination. In Deinococcus radiodurans (strain ATCC 13939 / DSM 20539 / JCM 16871 / CCUG 27074 / LMG 4051 / NBRC 15346 / NCIMB 9279 / VKM B-1422 / R1), this protein is Transcription termination/antitermination protein NusG.